The sequence spans 242 residues: Ribonuclease 3 2 (242 aa).

Residues 12–137 (LESLVRKLGL…VLGALYLSTS (126 aa)) form the RNase III domain. Position 51 (Glu51) interacts with Mg(2+). Asp55 is an active-site residue. The Mg(2+) site is built by Asp123 and Glu126. Residue Glu126 is part of the active site. Positions 165 to 235 (NYKAALQEWT…AKVAFLAITP (71 aa)) constitute a DRBM domain.

It belongs to the ribonuclease III family. As to quaternary structure, homodimer. Requires Mg(2+) as cofactor.

The protein localises to the cytoplasm. The catalysed reaction is Endonucleolytic cleavage to 5'-phosphomonoester.. In terms of biological role, digests double-stranded RNA. Involved in the processing of primary rRNA transcript to yield the immediate precursors to the large and small rRNAs (23S and 16S). Processes some mRNAs, and tRNAs when they are encoded in the rRNA operon. Processes pre-crRNA and tracrRNA of type II CRISPR loci if present in the organism. The polypeptide is Ribonuclease 3 2 (rnc2) (Nostoc sp. (strain PCC 7120 / SAG 25.82 / UTEX 2576)).